The primary structure comprises 218 residues: Radial spoke head 1 homolog (218 aa).

Over residues 1 to 13 the composition is skewed to acidic residues; it reads MSDAGTEEFDEEQ. The disordered stretch occupies residues 1–48; sequence MSDAGTEEFDEEQGSLGEYEGDRNEAGERHGQGKAVLPRGDTYQGAYE. MORN repeat units lie at residues 19–42, 43–65, 66–88, 89–111, 112–134, and 158–180; these read YEGDRNEAGERHGQGKAVLPRGDT, YQGAYENGKRCGQGTYKFKNGAR, YTGEWYMNLKHGQGVLYYPDGSK, YEGSWVDDQRQGHGVYTYPNGDT, YDGEWLHHQRHGQGTYTHQETGS, and YHGNFVNNNPSGPGKYVFDIGCE. Residues 20 to 31 are compositionally biased toward basic and acidic residues; sequence EGDRNEAGERHG.

Component of the axonemal radial spoke complexes. Interacts with septin SEPT7. Testis-specific.

It is found in the cytoplasm. It localises to the cytoskeleton. The protein localises to the cilium axoneme. The protein resides in the flagellum basal body. Its subcellular location is the flagellum axoneme. Functionally, functions as part of axonemal radial spoke complexes that play an important part in the motility of sperm and cilia. This chain is Radial spoke head 1 homolog (rsph1), found in Cyprinus carpio (Common carp).